Here is a 306-residue protein sequence, read N- to C-terminus: Large ribosomal subunit protein bL19m (306 aa).

Basic and acidic residues predominate over residues 34 to 43; the sequence is ENQEEQKKEA. The interval 34 to 53 is disordered; sequence ENQEEQKKEAPPTTPTSPVN.

It belongs to the bacterial ribosomal protein bL19 family. In terms of assembly, component of the mitochondrial ribosome large subunit (39S) which comprises a 16S rRNA and about 50 distinct proteins.

It localises to the mitochondrion. In Drosophila melanogaster (Fruit fly), this protein is Large ribosomal subunit protein bL19m (mRpL19).